A 421-amino-acid chain; its full sequence is MAAAFRRGCRVLRSVSHFECRTQHSKAAHKQEPGLGFSFELTEQQKEFQATARKFAREEIIPVAPEYDKSGEYPFPLIKRAWELGLINAHIPESCGGLGLGTFDACLITEELAYGCTGVQTAIEANSLGQMPVILAGNDQQKKKYLGRMTEQPMMCAYCVTEPSAGSDVAAIKTKAEKKGDEYVINGQKMWITNGGKANWYFLLARSNPDPKVPASKAFTGFIVEADTPGIHIGKKELNMGQRCSDTRGIAFEDVRVPKENVLIGEGAGFKIAMGAFDRTRPTVAAGAVGLAQRALDEATKYALDRKTFGKLLVEHQGVSFLLAEMAMKVELARLSYQRAAWEVDSGRRNTYYASIAKAFAGDIANQLATDAVQIFGGYGFNTEYPVEKLMRDAKIYQIYEGTAQIQRLIIAREHIEKYKN.

Residues 1 to 25 (MAAAFRRGCRVLRSVSHFECRTQHS) constitute a mitochondrion transit peptide. K30 and K69 each carry N6-acetyllysine; alternate. K30 and K69 each carry N6-succinyllysine; alternate. Residue K79 is modified to N6-acetyllysine. Residue 158–167 (YCVTEPSAGS) coordinates FAD. An octanoyl-CoA-binding site is contributed by S167. An N6-succinyllysine modification is found at K179. 191–193 (WIT) serves as a coordination point for FAD. Residue K212 is modified to N6-acetyllysine; alternate. K212 is subject to N6-succinyllysine; alternate. S216 provides a ligand contact to octanoyl-CoA. 4 positions are modified to N6-acetyllysine; alternate: K217, K235, K259, and K271. N6-succinyllysine; alternate is present on residues K217, K235, K259, and K271. 2 residues coordinate octanoyl-CoA: D278 and R281. K301 bears the N6-acetyllysine mark. Residues 306-308 (RKT) and 316-317 (HQ) each bind FAD. Positions 349 and 351 each coordinate octanoyl-CoA. T351 is modified (phosphothreonine). 374 to 378 (QIFGG) contacts FAD. E401 provides a ligand contact to octanoyl-CoA. E401 functions as the Proton acceptor in the catalytic mechanism. 402-405 (GTAQ) contributes to the FAD binding site.

This sequence belongs to the acyl-CoA dehydrogenase family. As to quaternary structure, homotetramer. Interacts with the heterodimeric electron transfer flavoprotein ETF. FAD is required as a cofactor. Post-translationally, acetylated. Could occur at proximity of the cofactor-binding sites and reduce the catalytic activity. Could be deacetylated by SIRT3.

Its subcellular location is the mitochondrion matrix. It catalyses the reaction a medium-chain 2,3-saturated fatty acyl-CoA + oxidized [electron-transfer flavoprotein] + H(+) = a medium-chain (2E)-enoyl-CoA + reduced [electron-transfer flavoprotein]. It carries out the reaction pentanoyl-CoA + oxidized [electron-transfer flavoprotein] + H(+) = (2E)-pentenoyl-CoA + reduced [electron-transfer flavoprotein]. The enzyme catalyses hexanoyl-CoA + oxidized [electron-transfer flavoprotein] + H(+) = (2E)-hexenoyl-CoA + reduced [electron-transfer flavoprotein]. The catalysed reaction is octanoyl-CoA + oxidized [electron-transfer flavoprotein] + H(+) = (2E)-octenoyl-CoA + reduced [electron-transfer flavoprotein]. It catalyses the reaction decanoyl-CoA + oxidized [electron-transfer flavoprotein] + H(+) = (2E)-decenoyl-CoA + reduced [electron-transfer flavoprotein]. It carries out the reaction dodecanoyl-CoA + oxidized [electron-transfer flavoprotein] + H(+) = (2E)-dodecenoyl-CoA + reduced [electron-transfer flavoprotein]. The enzyme catalyses tetradecanoyl-CoA + oxidized [electron-transfer flavoprotein] + H(+) = (2E)-tetradecenoyl-CoA + reduced [electron-transfer flavoprotein]. The catalysed reaction is oxidized [electron-transfer flavoprotein] + hexadecanoyl-CoA + H(+) = (2E)-hexadecenoyl-CoA + reduced [electron-transfer flavoprotein]. The protein operates within lipid metabolism; mitochondrial fatty acid beta-oxidation. In terms of biological role, medium-chain specific acyl-CoA dehydrogenase is one of the acyl-CoA dehydrogenases that catalyze the first step of mitochondrial fatty acid beta-oxidation, an aerobic process breaking down fatty acids into acetyl-CoA and allowing the production of energy from fats. The first step of fatty acid beta-oxidation consists in the removal of one hydrogen from C-2 and C-3 of the straight-chain fatty acyl-CoA thioester, resulting in the formation of trans-2-enoyl-CoA. Electron transfer flavoprotein (ETF) is the electron acceptor that transfers electrons to the main mitochondrial respiratory chain via ETF-ubiquinone oxidoreductase (ETF dehydrogenase). Among the different mitochondrial acyl-CoA dehydrogenases, medium-chain specific acyl-CoA dehydrogenase acts specifically on acyl-CoAs with saturated 6 to 12 carbons long primary chains. This chain is Medium-chain specific acyl-CoA dehydrogenase, mitochondrial, found in Mus musculus (Mouse).